Reading from the N-terminus, the 149-residue chain is Urease accessory protein UreE (149 aa).

Belongs to the UreE family.

Its subcellular location is the cytoplasm. Its function is as follows. Involved in urease metallocenter assembly. Binds nickel. Probably functions as a nickel donor during metallocenter assembly. The polypeptide is Urease accessory protein UreE (Ruegeria pomeroyi (strain ATCC 700808 / DSM 15171 / DSS-3) (Silicibacter pomeroyi)).